The following is a 344-amino-acid chain: MTIEVRNLVKKFGSFAALDGVNLKVDNGELLALLGPSGSGKTTLLRIIAGLDWPDSGEVSFNGEDALAQGARERHVGFVFQHYALFRHMTVFENVAFGLRVQPRAVRKEEARIRARVKELLDLVQLDWLADRYPSQLSGGQRQRIALARALAIEPRILLLDEPFGALDAKVRKELRKWLRSLHHEINVTSIFVTHDQEEALEVANRVVVMDKGRIEQIGSPEDVYESPATAFVHGFIGESIELPVRIDDGVVRLGERPLRLAADGLAPGASRLFVRRHDMLVGPPGTGAFEGAVRHVRNFGPVQRAEVALFGGETIEIDAPRDRELRAGDRVGLEPRRYRIFAG.

Positions 3–237 (IEVRNLVKKF…PATAFVHGFI (235 aa)) constitute an ABC transporter domain. 35–42 (GPSGSGKT) lines the ATP pocket.

The protein belongs to the ABC transporter superfamily. Sulfate/tungstate importer (TC 3.A.1.6) family. In terms of assembly, the complex is composed of two ATP-binding proteins (CysA), two transmembrane proteins (CysT and CysW) and a solute-binding protein (CysP).

The protein resides in the cell inner membrane. The catalysed reaction is sulfate(out) + ATP + H2O = sulfate(in) + ADP + phosphate + H(+). It catalyses the reaction thiosulfate(out) + ATP + H2O = thiosulfate(in) + ADP + phosphate + H(+). In terms of biological role, part of the ABC transporter complex CysAWTP involved in sulfate/thiosulfate import. Responsible for energy coupling to the transport system. This is Sulfate/thiosulfate import ATP-binding protein CysA from Bradyrhizobium diazoefficiens (strain JCM 10833 / BCRC 13528 / IAM 13628 / NBRC 14792 / USDA 110).